The chain runs to 741 residues: Transcription activator of gluconeogenesis BDBG_05438 (741 aa).

Positions 1 to 70 (MTASTRNGSP…NAKDPLRPRR (70 aa)) are disordered. A compositionally biased stretch (polar residues) spans 25-61 (KSMTTTPANPPETKSQTNGKGSGTAQSSQKPASTSAN). Positions 77–105 (CFACQRAHLTCGDERPCQRCIKRGLQDAC) form a DNA-binding region, zn(2)-C6 fungal-type. 6 disordered regions span residues 135–163 (QANTTRNIPNQRGNASNSNSNKVSRQSVS), 202–239 (SVFHAQSPSSTQNFDLSSNPQTQNLSSAMSQTASSVSG), 285–321 (GAGDTPPSDSATQRGSIGRSSGTFTAQNFGDSANNQS), 401–421 (TNLMHPTNTPQQSRISTPGLK), 559–590 (GSSLSSASSVRGSSTFTPRNNNTHNSIDPHTG), and 655–741 (FHGK…AKRG). A compositionally biased stretch (polar residues) spans 202–226 (SVFHAQSPSSTQNFDLSSNPQTQNL). Residues 227-238 (SSAMSQTASSVS) are compositionally biased toward low complexity. 2 stretches are compositionally biased toward polar residues: residues 291-321 (PSDSATQRGSIGRSSGTFTAQNFGDSANNQS) and 401-416 (TNLMHPTNTPQQSRIS). A compositionally biased stretch (low complexity) spans 560 to 572 (SSLSSASSVRGSS). The segment covering 573–586 (TFTPRNNNTHNSID) has biased composition (polar residues). Low complexity predominate over residues 672–718 (TGTTTSGDVATTTATGTSTSNGANANTNGNNTNPNDPSTAASSSASS). Basic residues predominate over residues 723 to 732 (RSNHLGKRGG).

Belongs to the ERT1/acuK family.

It localises to the nucleus. Its function is as follows. Transcription factor which regulates nonfermentable carbon utilization. Activator of gluconeogenetic genes. The sequence is that of Transcription activator of gluconeogenesis BDBG_05438 from Blastomyces gilchristii (strain SLH14081) (Blastomyces dermatitidis).